The following is a 280-amino-acid chain: Large ribosomal subunit protein uL2 (280 aa).

The tract at residues 223-280 is disordered; that stretch reads VVMNPVDHPHGGGEGRTSGGRHPVTPWGKPTKGARTRNKNKASSKLIIRSRHAKKKGR. Residues 254–280 are compositionally biased toward basic residues; sequence KGARTRNKNKASSKLIIRSRHAKKKGR.

It belongs to the universal ribosomal protein uL2 family. In terms of assembly, part of the 50S ribosomal subunit. Forms a bridge to the 30S subunit in the 70S ribosome.

Functionally, one of the primary rRNA binding proteins. Required for association of the 30S and 50S subunits to form the 70S ribosome, for tRNA binding and peptide bond formation. It has been suggested to have peptidyltransferase activity; this is somewhat controversial. Makes several contacts with the 16S rRNA in the 70S ribosome. This is Large ribosomal subunit protein uL2 from Dinoroseobacter shibae (strain DSM 16493 / NCIMB 14021 / DFL 12).